Here is a 680-residue protein sequence, read N- to C-terminus: Multidrug resistance protein MdtO (680 aa).

9 helical membrane passes run 43-63 (VILI…AVLF), 75-95 (FVAI…FLIY), 100-120 (GEPL…MFLM), 125-145 (LGLV…MLDY), 155-175 (WCIV…VLWF), 399-419 (FGGA…VMPW), 423-443 (IVEL…IATS), 454-474 (MVVT…YDLV), and 480-500 (ALGI…VWPE).

Belongs to the MdtO family. In terms of assembly, could be part of a tripartite efflux system composed of MdtN, MdtO and MdtP.

Its subcellular location is the cell inner membrane. Its function is as follows. Could be involved in resistance to puromycin, acriflavine and tetraphenylarsonium chloride. This Shigella flexneri protein is Multidrug resistance protein MdtO (mdtO).